We begin with the raw amino-acid sequence, 625 residues long: Vacuolar-sorting receptor 2 (625 aa).

A signal peptide spans 1 to 19 (MRTTNVWLVVIVWVTVGWS). The Lumenal segment spans residues 20–567 (SCTGRFVVEK…INRDARGDFS (548 aa)). A PA domain is found at 55-167 (QYGGSMSGAV…SLGSAIKTAI (113 aa)). N-linked (GlcNAc...) asparagine glycosylation is found at N147, N293, and N433. EGF-like domains lie at 415-465 (ETNE…THCE) and 468-515 (GALR…KECK). 7 disulfide bridges follow: C419-C437, C426-C446, C448-C464, C472-C492, C479-C500, C502-C514, and C544-C557. An EGF-like 3; calcium-binding domain is found at 516 to 558 (DVNECEEKTACQCRDCKCKNTWGSYECSCSGSLLYIREHDICI). The helical transmembrane segment at 568–588 (WGVIWIIIMGLGAAALGAYTV) threads the bilayer. Residues 589–625 (YKYRIRTYMDSEIRAIMAQYMPLDNNPNTQLSSQLEL) lie on the Cytoplasmic side of the membrane. Residues 608-611 (YMPL) carry the Tyrosine-based internalization motif motif.

The protein belongs to the VSR (BP-80) family. As to expression, expressed only in flowers.

It localises to the membrane. It is found in the golgi apparatus membrane. Its subcellular location is the cytoplasmic vesicle. The protein localises to the clathrin-coated vesicle membrane. The protein resides in the prevacuolar compartment membrane. Vacuolar-sorting receptor (VSR) involved in clathrin-coated vesicles sorting from Golgi apparatus to vacuoles. The sequence is that of Vacuolar-sorting receptor 2 from Arabidopsis thaliana (Mouse-ear cress).